We begin with the raw amino-acid sequence, 251 residues long: Myozenin-3 (251 aa).

Serine 31 is subject to Phosphoserine. The binding to ACTN2, PPP3CA and TCAP stretch occupies residues 50-67 (LLFQKRQRRVQKFTFELA). Positions 67-110 (AASQRAMLAGSARRKVTGTAESGTVANANGPEGPNYRSELHIFP) are binding to FLNC. Positions 79 to 102 (RRKVTGTAESGTVANANGPEGPNY) are disordered. Residues 186–207 (PSPNDYRNFNKTPVPFGGPLVG) are binding to ACTN2.

It belongs to the myozenin family. In terms of assembly, interacts with ACTN2, LDB3, FLNC, PPP3CA and TCAP. Expressed specifically in skeletal muscle. Not detected in heart.

The protein localises to the cytoplasm. The protein resides in the myofibril. It is found in the sarcomere. It localises to the z line. Its function is as follows. Myozenins may serve as intracellular binding proteins involved in linking Z line proteins such as alpha-actinin, gamma-filamin, TCAP/telethonin, LDB3/ZASP and localizing calcineurin signaling to the sarcomere. Plays an important role in the modulation of calcineurin signaling. May play a role in myofibrillogenesis. This is Myozenin-3 from Homo sapiens (Human).